The following is a 168-amino-acid chain: Inorganic pyrophosphatase (168 aa).

Positions 23, 37, and 49 each coordinate substrate. Mg(2+) contacts are provided by aspartate 59, aspartate 64, and aspartate 96. Tyrosine 133 serves as a coordination point for substrate.

This sequence belongs to the PPase family. As to quaternary structure, homohexamer. The cofactor is Mg(2+).

It localises to the cytoplasm. The enzyme catalyses diphosphate + H2O = 2 phosphate + H(+). Catalyzes the hydrolysis of inorganic pyrophosphate (PPi) forming two phosphate ions. This is Inorganic pyrophosphatase from Methanosarcina acetivorans (strain ATCC 35395 / DSM 2834 / JCM 12185 / C2A).